Consider the following 560-residue polypeptide: Glutamine--tRNA ligase (560 aa).

Residues 36–46 carry the 'HIGH' region motif; sequence PEPNGFAHIGH. ATP is bound by residues 37–39 and 43–49; these read EPN and HIGHAKA. L-glutamine contacts are provided by D69 and Y214. Residue 263–264 coordinates ATP; it reads RL. A 'KMSKS' region motif is present at residues 270–274; it reads LTSKR.

This sequence belongs to the class-I aminoacyl-tRNA synthetase family. In terms of assembly, monomer.

It localises to the cytoplasm. It catalyses the reaction tRNA(Gln) + L-glutamine + ATP = L-glutaminyl-tRNA(Gln) + AMP + diphosphate. The polypeptide is Glutamine--tRNA ligase (Chromobacterium violaceum (strain ATCC 12472 / DSM 30191 / JCM 1249 / CCUG 213 / NBRC 12614 / NCIMB 9131 / NCTC 9757 / MK)).